The primary structure comprises 211 residues: Thymidylate kinase (211 aa).

10-17 (GGDGVGKS) lines the ATP pocket.

Belongs to the thymidylate kinase family.

It carries out the reaction dTMP + ATP = dTDP + ADP. Phosphorylation of dTMP to form dTDP in both de novo and salvage pathways of dTTP synthesis. The chain is Thymidylate kinase from Clavibacter michiganensis subsp. michiganensis (strain NCPPB 382).